Reading from the N-terminus, the 893-residue chain is DNA gyrase subunit A (893 aa).

One can recognise a Topo IIA-type catalytic domain in the interval 35 to 501 (LPDVRDGLKP…GLEDLEDEDL (467 aa)). Tyr123 serves as the catalytic O-(5'-phospho-DNA)-tyrosine intermediate. The GyrA-box signature appears at 528-534 (QNRGGRG). The tract at residues 810-893 (VNEEDDNEEN…ASDNEEDSDE (84 aa)) is disordered. Composition is skewed to acidic residues over residues 812–821 (EEDDNEENAD) and 852–862 (DAEMESVESPE). The segment covering 863-879 (NDDRIDIRQDFMDRVNE) has biased composition (basic and acidic residues). A compositionally biased stretch (acidic residues) spans 880 to 893 (DIESASDNEEDSDE).

It belongs to the type II topoisomerase GyrA/ParC subunit family. As to quaternary structure, heterotetramer, composed of two GyrA and two GyrB chains. In the heterotetramer, GyrA contains the active site tyrosine that forms a transient covalent intermediate with DNA, while GyrB binds cofactors and catalyzes ATP hydrolysis.

It localises to the cytoplasm. It carries out the reaction ATP-dependent breakage, passage and rejoining of double-stranded DNA.. A type II topoisomerase that negatively supercoils closed circular double-stranded (ds) DNA in an ATP-dependent manner to modulate DNA topology and maintain chromosomes in an underwound state. Negative supercoiling favors strand separation, and DNA replication, transcription, recombination and repair, all of which involve strand separation. Also able to catalyze the interconversion of other topological isomers of dsDNA rings, including catenanes and knotted rings. Type II topoisomerases break and join 2 DNA strands simultaneously in an ATP-dependent manner. The chain is DNA gyrase subunit A from Staphylococcus epidermidis (strain ATCC 35984 / DSM 28319 / BCRC 17069 / CCUG 31568 / BM 3577 / RP62A).